Reading from the N-terminus, the 61-residue chain is Small ribosomal subunit protein uS14 (61 aa).

Residues Cys24, Cys27, Cys40, and Cys43 each contribute to the Zn(2+) site.

Belongs to the universal ribosomal protein uS14 family. Zinc-binding uS14 subfamily. Part of the 30S ribosomal subunit. Contacts proteins S3 and S10. Zn(2+) serves as cofactor.

Binds 16S rRNA, required for the assembly of 30S particles and may also be responsible for determining the conformation of the 16S rRNA at the A site. This is Small ribosomal subunit protein uS14 from Elusimicrobium minutum (strain Pei191).